We begin with the raw amino-acid sequence, 461 residues long: D-phenylhydantoinase (461 aa).

H59, H61, and K151 together coordinate a divalent metal cation. N6-carboxylysine is present on K151. Y156 is a substrate binding site. A divalent metal cation-binding residues include H182 and H239. Substrate is bound at residue S286. D313 is a binding site for a divalent metal cation. N335 lines the substrate pocket.

The protein belongs to the metallo-dependent hydrolases superfamily. Hydantoinase/dihydropyrimidinase family. In terms of assembly, homotetramer. A divalent metal cation serves as cofactor. In terms of processing, carboxylation allows a single lysine to coordinate two divalent metal cations.

The enzyme catalyses D-5-phenylhydantoin + H2O = N-carbamoyl-D-phenylglycine + H(+). Its function is as follows. Catalyzes the stereospecific hydrolysis of the cyclic amide bond of D-hydantoin derivatives with an aromatic side chains at the 5'-position. Has no activity on dihydropyrimidines. The physiological function is unknown. In Escherichia coli O81 (strain ED1a), this protein is D-phenylhydantoinase.